A 628-amino-acid chain; its full sequence is Eukaryotic peptide chain release factor GTP-binding subunit ERF3B (628 aa).

Residues 1–10 show a composition bias toward low complexity; it reads MDSGSSSSDS. Disordered stretches follow at residues 1–49, 72–124, and 146–195; these read MDSG…SAFS, FLRG…LEGS, and LEES…VIVP. Residues 201-425 form the tr-type G domain; the sequence is KEHVNVVFIG…YLDNLPNFNR (225 aa). The segment at 210-217 is G1; sequence GHVDAGKS. 213 to 218 is a GTP binding site; sequence DAGKST. Positions 266–270 are G2; the sequence is GKTVE. The tract at residues 287-290 is G3; it reads DAPG. GTP contacts are provided by residues 349–352 and 391–393; these read NKMD and SGL. Positions 349-352 are G4; sequence NKMD. The interval 391-393 is G5; the sequence is SGL.

It belongs to the TRAFAC class translation factor GTPase superfamily. Classic translation factor GTPase family. ERF3 subfamily. Component of the eRF1-eRF3-GTP ternary complex, composed of ETF1/ERF1 and ERF3 (GSPT1/ERF3A or GSPT2/ERF3B) and GTP. Component of the transient SURF (SMG1-UPF1-eRF1-eRF3) complex. Interacts with UPF1 and PABPC1. Highly expressed in IUCC stage II colorectal cancer (CRC).

It is found in the cytoplasm. The catalysed reaction is GTP + H2O = GDP + phosphate + H(+). In terms of biological role, GTPase component of the eRF1-eRF3-GTP ternary complex, a ternary complex that mediates translation termination in response to the termination codons UAA, UAG and UGA. GSPT2/ERF3B mediates ETF1/ERF1 delivery to stop codons: The eRF1-eRF3-GTP complex binds to a stop codon in the ribosomal A-site. GTP hydrolysis by GSPT2/ERF3B induces a conformational change that leads to its dissociation, permitting ETF1/ERF1 to accommodate fully in the A-site. Component of the transient SURF complex which recruits UPF1 to stalled ribosomes in the context of nonsense-mediated decay (NMD) of mRNAs containing premature stop codons. The protein is Eukaryotic peptide chain release factor GTP-binding subunit ERF3B (GSPT2) of Homo sapiens (Human).